Here is a 687-residue protein sequence, read N- to C-terminus: Elongation factor G (687 aa).

In terms of domain architecture, tr-type G spans 8–282; it reads NKFRNIGIMA…AVLAYLPSPL (275 aa). GTP is bound by residues 17–24, 81–85, and 135–138; these read AHIDAGKT, DTPGH, and NKMD.

This sequence belongs to the TRAFAC class translation factor GTPase superfamily. Classic translation factor GTPase family. EF-G/EF-2 subfamily.

It is found in the cytoplasm. Functionally, catalyzes the GTP-dependent ribosomal translocation step during translation elongation. During this step, the ribosome changes from the pre-translocational (PRE) to the post-translocational (POST) state as the newly formed A-site-bound peptidyl-tRNA and P-site-bound deacylated tRNA move to the P and E sites, respectively. Catalyzes the coordinated movement of the two tRNA molecules, the mRNA and conformational changes in the ribosome. This Clostridium novyi (strain NT) protein is Elongation factor G.